A 409-amino-acid polypeptide reads, in one-letter code: Serine hydroxymethyltransferase (409 aa).

Residues leucine 116 and 120–122 (GHL) each bind (6S)-5,6,7,8-tetrahydrofolate. The residue at position 225 (lysine 225) is an N6-(pyridoxal phosphate)lysine.

Belongs to the SHMT family. As to quaternary structure, homodimer. It depends on pyridoxal 5'-phosphate as a cofactor.

The protein resides in the cytoplasm. It carries out the reaction (6R)-5,10-methylene-5,6,7,8-tetrahydrofolate + glycine + H2O = (6S)-5,6,7,8-tetrahydrofolate + L-serine. It functions in the pathway one-carbon metabolism; tetrahydrofolate interconversion. The protein operates within amino-acid biosynthesis; glycine biosynthesis; glycine from L-serine: step 1/1. In terms of biological role, catalyzes the reversible interconversion of serine and glycine with tetrahydrofolate (THF) serving as the one-carbon carrier. This reaction serves as the major source of one-carbon groups required for the biosynthesis of purines, thymidylate, methionine, and other important biomolecules. Also exhibits THF-independent aldolase activity toward beta-hydroxyamino acids, producing glycine and aldehydes, via a retro-aldol mechanism. This chain is Serine hydroxymethyltransferase, found in Acholeplasma laidlawii (strain PG-8A).